A 563-amino-acid chain; its full sequence is NAD(P)H-quinone oxidoreductase chain 4 (563 aa).

15 helical membrane passes run 25–45 (FPWL…VPFI), 56–76 (WFAL…YLYG), 90–110 (VSWL…ISMP), 111–131 (LILL…PVTF), 133–153 (PKLF…VFAV), 157–177 (LLFF…LAIW), 189–209 (FIIY…AMGF), 230–250 (GFQL…LPIV), 264–284 (TAPV…YALM), 298–318 (FAPL…LTSF), 335–355 (MGFV…GAML), 356–376 (QMIS…ATYD), 397–417 (FALW…SGFV), 438–458 (IVIA…LLSM), and 485–505 (VYII…PRLM).

Belongs to the complex I subunit 4 family.

It localises to the cellular thylakoid membrane. The enzyme catalyses a plastoquinone + NADH + (n+1) H(+)(in) = a plastoquinol + NAD(+) + n H(+)(out). It carries out the reaction a plastoquinone + NADPH + (n+1) H(+)(in) = a plastoquinol + NADP(+) + n H(+)(out). Functionally, NDH-1 shuttles electrons from NAD(P)H, via FMN and iron-sulfur (Fe-S) centers, to quinones in the respiratory chain. The immediate electron acceptor for the enzyme in this species is believed to be plastoquinone. Couples the redox reaction to proton translocation (for every two electrons transferred, four hydrogen ions are translocated across the cytoplasmic membrane), and thus conserves the redox energy in a proton gradient. The sequence is that of NAD(P)H-quinone oxidoreductase chain 4 from Prochlorococcus marinus (strain MIT 9303).